The chain runs to 401 residues: MAKQKFERTKPHINVGTIGHVDHGKTTLTAAITKVLSLKGAAQFMAYDQIDNAPEERARGITIAIRHVEYQTDKRHYAHVDCPGHADYIKNMITGAAQMDGAILVVSAPDGPMPQTREHILLARQVQVPAIVVFLNKVDMMDDPELLELVELELRELLSKYGFPGDEIPIVRGSARNALESPSKDINAPEYKCILELMNAVDEYIPTPQRAVDQPFLMPIEDVFGIKGRGTVVTGRIERGKVKVGDTVEIVGMTNDAPRRTVVTGVEMFQKTLDEGIAGDNVGCLLRGIERTDVERGQVLCAPGSIKPHKKFEAQVYVLKKEEGGRHTPFFSGYRPQFYIRTTDVTGAIGLPAGMEMVMPGDNVVMTIELIVPVAIEEGLRFAIREGGRTVGAGVVTKILD.

One can recognise a tr-type G domain in the interval 10–209; sequence KPHINVGTIG…AVDEYIPTPQ (200 aa). The segment at 19-26 is G1; it reads GHVDHGKT. 19 to 26 contributes to the GTP binding site; it reads GHVDHGKT. A Mg(2+)-binding site is contributed by Thr-26. The interval 60–64 is G2; sequence GITIA. Residues 81-84 are G3; the sequence is DCPG. GTP contacts are provided by residues 81–85 and 136–139; these read DCPGH and NKVD. The interval 136-139 is G4; sequence NKVD. Residues 174-176 are G5; sequence SAR.

This sequence belongs to the TRAFAC class translation factor GTPase superfamily. Classic translation factor GTPase family. EF-Tu/EF-1A subfamily. In terms of assembly, monomer.

It is found in the cytoplasm. The catalysed reaction is GTP + H2O = GDP + phosphate + H(+). In terms of biological role, GTP hydrolase that promotes the GTP-dependent binding of aminoacyl-tRNA to the A-site of ribosomes during protein biosynthesis. The chain is Elongation factor Tu from Chloroflexus aurantiacus (strain ATCC 29366 / DSM 635 / J-10-fl).